The chain runs to 289 residues: (+)-kolavelool synthase (289 aa).

Belongs to the diterpene synthase family.

It carries out the reaction (+)-kolavenyl diphosphate + H2O = (+)-kolavelool + diphosphate. In terms of biological role, involved in the biosynthesis of (+)-O-methylkolavelool. Catalyzes the biosynthesis of (+)-kolavelool from (+)-kolavenyl diphosphate via the release of the diphosphate moiety through the nucleophilic addition of a water molecule. This Herpetosiphon aurantiacus (strain ATCC 23779 / DSM 785 / 114-95) protein is (+)-kolavelool synthase.